The following is a 267-amino-acid chain: Hydroxyethylthiazole kinase (267 aa).

Position 46 (methionine 46) interacts with substrate. Positions 122 and 168 each coordinate ATP. Residue glycine 195 participates in substrate binding.

This sequence belongs to the Thz kinase family. Mg(2+) serves as cofactor.

It catalyses the reaction 5-(2-hydroxyethyl)-4-methylthiazole + ATP = 4-methyl-5-(2-phosphooxyethyl)-thiazole + ADP + H(+). It participates in cofactor biosynthesis; thiamine diphosphate biosynthesis; 4-methyl-5-(2-phosphoethyl)-thiazole from 5-(2-hydroxyethyl)-4-methylthiazole: step 1/1. Its function is as follows. Catalyzes the phosphorylation of the hydroxyl group of 4-methyl-5-beta-hydroxyethylthiazole (THZ). The protein is Hydroxyethylthiazole kinase of Moorella thermoacetica (strain ATCC 39073 / JCM 9320).